Here is a 985-residue protein sequence, read N- to C-terminus: SWI/SNF complex subunit SWI3D (985 aa).

The interval Met-1–Ser-55 is disordered. A compositionally biased stretch (basic residues) spans Pro-30–Ala-41. A coiled-coil region spans residues Glu-108–Asp-133. An SWIRM domain is found at His-145 to Gly-242. The segment at Ala-305 to Ala-359 adopts a ZZ-type; degenerate zinc-finger fold. Cys-310, Cys-313, Cys-333, and Cys-336 together coordinate Zn(2+). In terms of domain architecture, SANT spans Val-362 to Ala-413. 3 stretches are compositionally biased toward basic and acidic residues: residues Thr-428–Pro-464, Ala-493–Thr-502, and Asp-615–Pro-661. Disordered regions lie at residues Thr-428–Thr-502 and Glu-591–Lys-814. Positions Gly-662–Lys-671 are enriched in polar residues. The span at Cys-703–Asp-724 shows a compositional bias: basic and acidic residues. The span at Ala-725 to Asp-736 shows a compositional bias: polar residues. Residues Ala-742–Gly-776 show a composition bias toward basic and acidic residues. A compositionally biased stretch (polar residues) spans Val-780–Glu-800. Residues Ile-839–Leu-900 adopt a coiled-coil conformation. A disordered region spans residues Met-944–Val-985. The segment covering Pro-947–Pro-958 has biased composition (pro residues). The segment covering Ala-965–Val-985 has biased composition (polar residues).

Interacts with SWI3B, but not with BSH. Component of a RNA-directed DNA methylation (RdDM) complex that contains at least MORC6, MORC1/CRT1, MORC2, SWI3D and SUVH9. Interacts with MORC6 and SUVH9. Ubiquitously expressed.

The protein resides in the nucleus. In terms of biological role, component of a multiprotein complex equivalent of the SWI/SNF complex, an ATP-dependent chromatin-remodeling complex, which is required for the positive and negative regulation of gene expression of a large number of genes. It changes chromatin structure by altering DNA-histone contacts within a nucleosome, leading eventually to a change in nucleosome position, thus facilitating or repressing binding of gene-specific transcription factors. The chain is SWI/SNF complex subunit SWI3D (SWI3D) from Arabidopsis thaliana (Mouse-ear cress).